The chain runs to 121 residues: NADH-quinone oxidoreductase subunit A 1 (121 aa).

3 consecutive transmembrane segments (helical) span residues 11–31 (IAIF…APFA), 65–85 (LVSI…PWAV), and 90–110 (MGWF…VGFI).

The protein belongs to the complex I subunit 3 family. In terms of assembly, NDH-1 is composed of 14 different subunits. Subunits NuoA, H, J, K, L, M, N constitute the membrane sector of the complex.

The protein resides in the cell inner membrane. The enzyme catalyses a quinone + NADH + 5 H(+)(in) = a quinol + NAD(+) + 4 H(+)(out). Functionally, NDH-1 shuttles electrons from NADH, via FMN and iron-sulfur (Fe-S) centers, to quinones in the respiratory chain. The immediate electron acceptor for the enzyme in this species is believed to be ubiquinone. Couples the redox reaction to proton translocation (for every two electrons transferred, four hydrogen ions are translocated across the cytoplasmic membrane), and thus conserves the redox energy in a proton gradient. In Rhizobium meliloti (strain 1021) (Ensifer meliloti), this protein is NADH-quinone oxidoreductase subunit A 1.